Here is a 125-residue protein sequence, read N- to C-terminus: Snaclec alboaggregin-A subunit beta (125 aa).

The C-type lectin domain maps to 1 to 125; the sequence is GFDCPFGWSS…TRYPVCKFXG (125 aa). Intrachain disulfides connect C4–C15, C32–C121, and C98–C113.

This sequence belongs to the snaclec family. As to quaternary structure, heterotetramer of the subunits alpha, alpha', beta and beta'; disulfide-linked. Expressed by the venom gland.

The protein resides in the secreted. Functionally, potent platelet activator that aggregates platelets via both GPIbalpha (GP1BA) and GPVI (GP6). Induces a tyrosine phosphorylation profile in platelets that resembles this produced by collagen, involving the time dependent tyrosine phosphorylation of Fc receptor gamma chain (FCGR1A), phospholipase Cgamma2 (PLCG2), and LAT. The chain is Snaclec alboaggregin-A subunit beta from Trimeresurus albolabris (White-lipped pit viper).